The chain runs to 588 residues: L-fucose isomerase (588 aa).

Active-site proton acceptor residues include glutamate 335 and aspartate 359. 3 residues coordinate Mn(2+): glutamate 335, aspartate 359, and histidine 525.

The protein belongs to the L-fucose isomerase family. It depends on Mn(2+) as a cofactor.

It is found in the cytoplasm. The catalysed reaction is L-fucose = L-fuculose. It functions in the pathway carbohydrate degradation; L-fucose degradation; L-lactaldehyde and glycerone phosphate from L-fucose: step 1/3. In terms of biological role, converts the aldose L-fucose into the corresponding ketose L-fuculose. This is L-fucose isomerase from Streptococcus pneumoniae serotype 2 (strain D39 / NCTC 7466).